Consider the following 320-residue polypeptide: Cytochrome f (320 aa).

A signal peptide spans 1-35; it reads MENRKTFSWLKEQMIRSISVSIMIYVITRTSISNA. Tyrosine 36, cysteine 56, cysteine 59, and histidine 60 together coordinate heme. Residues 286–305 traverse the membrane as a helical segment; sequence VQGLLFFFASVILAQVFLVL.

The protein belongs to the cytochrome f family. As to quaternary structure, the 4 large subunits of the cytochrome b6-f complex are cytochrome b6, subunit IV (17 kDa polypeptide, petD), cytochrome f and the Rieske protein, while the 4 small subunits are PetG, PetL, PetM and PetN. The complex functions as a dimer. Heme serves as cofactor.

Its subcellular location is the plastid. The protein resides in the chloroplast thylakoid membrane. Its function is as follows. Component of the cytochrome b6-f complex, which mediates electron transfer between photosystem II (PSII) and photosystem I (PSI), cyclic electron flow around PSI, and state transitions. The sequence is that of Cytochrome f (petA) from Zea mays (Maize).